The following is a 470-amino-acid chain: Transcription factor SOX-8 (470 aa).

The span at Met1–Leu12 shows a compositional bias: basic and acidic residues. The interval Met1–Leu60 is disordered. Positions Ala67 to Pro107 are dimerization (DIM). Residues Val109–Lys177 constitute a DNA-binding region (HMG box). Composition is skewed to basic and acidic residues over residues Glu163 to Tyr178, Asp219 to Gly228, and Thr242 to Arg257. 2 disordered regions span residues Glu163–Arg257 and Ala327–Ser381. The tract at residues Pro233 to Asp308 is transactivation domain (TAM). Low complexity predominate over residues Ser338–Ser349. A transactivation domain (TAC) region spans residues Arg353–Pro470. Polar residues predominate over residues Glu359–Gly372. A 9aaTAD motif is present at residues Ser424–Phe432.

In terms of tissue distribution, widely expressed in the embryo.

It is found in the nucleus. Transcription factor that may play a role in central nervous system, limb and facial development. May be involved in male sex determination. Binds the consensus motif 5'-[AT][AT]CAA[AT]G-3'. In Gallus gallus (Chicken), this protein is Transcription factor SOX-8 (SOX8).